A 57-amino-acid chain; its full sequence is Cold shock protein CspB (57 aa).

The CSD domain maps to 1-57 (IKWFNSEKGFGFIEVEGQDDVFVHFSAIQGEGFKCLEEGQAVSFEIVEGNRGPQAAN).

In terms of assembly, homodimer.

The protein localises to the cytoplasm. In terms of biological role, affects cell viability at low temperatures. The polypeptide is Cold shock protein CspB (cspB) (Sporosarcina globispora (Bacillus globisporus)).